The sequence spans 235 residues: Sugar fermentation stimulation protein homolog (235 aa).

The protein belongs to the SfsA family.

In Pseudomonas aeruginosa (strain ATCC 15692 / DSM 22644 / CIP 104116 / JCM 14847 / LMG 12228 / 1C / PRS 101 / PAO1), this protein is Sugar fermentation stimulation protein homolog.